The primary structure comprises 119 residues: MTKEQIIEAVKSMTVLELNDLVKAIEEEFGVTAAAPVAVAGGAGEAAAEKTEFDVELTSAGAQKIKVIKVVREITGLGLKEAKELVDNTPKVIKEAAAKEEAEEIKAKLEEVGAAVEVK.

This sequence belongs to the bacterial ribosomal protein bL12 family. In terms of assembly, homodimer. Part of the ribosomal stalk of the 50S ribosomal subunit. Forms a multimeric L10(L12)X complex, where L10 forms an elongated spine to which 2 to 4 L12 dimers bind in a sequential fashion. Binds GTP-bound translation factors.

Its function is as follows. Forms part of the ribosomal stalk which helps the ribosome interact with GTP-bound translation factors. Is thus essential for accurate translation. This chain is Large ribosomal subunit protein bL12, found in Bacillus anthracis (strain A0248).